The sequence spans 430 residues: Probable FAD-dependent monooxygenase (430 aa).

The N-terminal stretch at 1–23 is a signal peptide; sequence MGSTSTPPHVLIIGAGITGLALA. 9–37 contributes to the FAD binding site; it reads HVLIIGAGITGLALAQALRKHGVSFAVYE. Asn130 and Asn151 each carry an N-linked (GlcNAc...) asparagine glycan. 307-330 lines the FAD pocket; sequence LEDWPTPPKGSWSNLGGTATLVGD.

Requires FAD as cofactor.

This chain is Probable FAD-dependent monooxygenase, found in Arthroderma benhamiae (strain ATCC MYA-4681 / CBS 112371) (Trichophyton mentagrophytes).